We begin with the raw amino-acid sequence, 64 residues long: Large ribosomal subunit protein uL30 (64 aa).

This sequence belongs to the universal ribosomal protein uL30 family. As to quaternary structure, part of the 50S ribosomal subunit.

In Rhodopseudomonas palustris (strain BisA53), this protein is Large ribosomal subunit protein uL30.